Consider the following 30-residue polypeptide: NADH-ubiquinone oxidoreductase chain 5 (30 aa).

The chain crosses the membrane as a helical span at residues 7-27 (NIIIIINSSLIIILFSSIFFF).

This sequence belongs to the complex I subunit 5 family.

The protein resides in the mitochondrion inner membrane. It catalyses the reaction a ubiquinone + NADH + 5 H(+)(in) = a ubiquinol + NAD(+) + 4 H(+)(out). Core subunit of the mitochondrial membrane respiratory chain NADH dehydrogenase (Complex I) that is believed to belong to the minimal assembly required for catalysis. Complex I functions in the transfer of electrons from NADH to the respiratory chain. The immediate electron acceptor for the enzyme is believed to be ubiquinone. The protein is NADH-ubiquinone oxidoreductase chain 5 (ND5) of Pisaster ochraceus (Ochre sea star).